Reading from the N-terminus, the 357-residue chain is sn-glycerol-3-phosphate import ATP-binding protein UgpC (357 aa).

The ABC transporter domain occupies 4–235; sequence LKLQAVTKSY…PASLFVASFI (232 aa). 37–44 is a binding site for ATP; the sequence is GPSGCGKS.

This sequence belongs to the ABC transporter superfamily. sn-glycerol-3-phosphate importer (TC 3.A.1.1.3) family. In terms of assembly, the complex is composed of two ATP-binding proteins (UgpC), two transmembrane proteins (UgpA and UgpE) and a solute-binding protein (UgpB).

It is found in the cell inner membrane. It carries out the reaction sn-glycerol 3-phosphate(out) + ATP + H2O = sn-glycerol 3-phosphate(in) + ADP + phosphate + H(+). Part of the ABC transporter complex UgpBAEC involved in sn-glycerol-3-phosphate (G3P) import. Responsible for energy coupling to the transport system. This is sn-glycerol-3-phosphate import ATP-binding protein UgpC from Pectobacterium atrosepticum (strain SCRI 1043 / ATCC BAA-672) (Erwinia carotovora subsp. atroseptica).